Here is a 421-residue protein sequence, read N- to C-terminus: Phosphoribosylamine--glycine ligase (421 aa).

An ATP-grasp domain is found at Lys-108–Met-314. Ile-134 to Ser-195 serves as a coordination point for ATP. Residues Glu-284 and Asn-286 each contribute to the Mg(2+) site.

The protein belongs to the GARS family. Mg(2+) serves as cofactor. It depends on Mn(2+) as a cofactor.

It carries out the reaction 5-phospho-beta-D-ribosylamine + glycine + ATP = N(1)-(5-phospho-beta-D-ribosyl)glycinamide + ADP + phosphate + H(+). It functions in the pathway purine metabolism; IMP biosynthesis via de novo pathway; N(1)-(5-phospho-D-ribosyl)glycinamide from 5-phospho-alpha-D-ribose 1-diphosphate: step 2/2. This is Phosphoribosylamine--glycine ligase from Streptococcus pyogenes serotype M1.